The chain runs to 239 residues: Ribonuclease PH (239 aa).

Phosphate-binding positions include R86 and 124 to 126; that span reads GTR.

It belongs to the RNase PH family. As to quaternary structure, homohexameric ring arranged as a trimer of dimers.

The enzyme catalyses tRNA(n+1) + phosphate = tRNA(n) + a ribonucleoside 5'-diphosphate. In terms of biological role, phosphorolytic 3'-5' exoribonuclease that plays an important role in tRNA 3'-end maturation. Removes nucleotide residues following the 3'-CCA terminus of tRNAs; can also add nucleotides to the ends of RNA molecules by using nucleoside diphosphates as substrates, but this may not be physiologically important. Probably plays a role in initiation of 16S rRNA degradation (leading to ribosome degradation) during starvation. This chain is Ribonuclease PH, found in Rickettsia bellii (strain OSU 85-389).